We begin with the raw amino-acid sequence, 349 residues long: Flap endonuclease 1 (349 aa).

The segment at 1 to 102 (MGVTELGKLI…AEIEARRRVK (102 aa)) is N-domain. 7 residues coordinate Mg(2+): Asp-31, Asp-84, Glu-156, Glu-158, Asp-177, Asp-179, and Asp-239. The segment at 120 to 261 (DVAKYMKRVI…KALKLVLEFG (142 aa)) is I-domain.

Belongs to the XPG/RAD2 endonuclease family. FEN1 subfamily. In terms of assembly, interacts with PCNA. PCNA stimulates the nuclease activity without altering cleavage specificity. The cofactor is Mg(2+).

Its function is as follows. Structure-specific nuclease with 5'-flap endonuclease and 5'-3' exonuclease activities involved in DNA replication and repair. During DNA replication, cleaves the 5'-overhanging flap structure that is generated by displacement synthesis when DNA polymerase encounters the 5'-end of a downstream Okazaki fragment. Binds the unpaired 3'-DNA end and kinks the DNA to facilitate 5' cleavage specificity. Cleaves one nucleotide into the double-stranded DNA from the junction in flap DNA, leaving a nick for ligation. Also involved in the base excision repair (BER) pathway. Acts as a genome stabilization factor that prevents flaps from equilibrating into structures that lead to duplications and deletions. Also possesses 5'-3' exonuclease activity on nicked or gapped double-stranded DNA. The chain is Flap endonuclease 1 from Pyrobaculum neutrophilum (strain DSM 2338 / JCM 9278 / NBRC 100436 / V24Sta) (Thermoproteus neutrophilus).